The following is a 263-amino-acid chain: MTHPPPFIAVIPARLASTRLPNKPLADLGGKPMVVRVAERAREAGAQQVLVASDAQSVLDAARDHGFEAVLTRADHPSGTDRLAEVAAAFGWRDDTVVVNVQGDEPLIDPVLVRDVASHLAAHPACAIATAAHPIHDAADVFNPNVVKVALDAQSVALYFSRAPIPWSRDAYQPHWPDVAAMPAPAFPVYRHIGLYAYRARFLRTYPSLAQAPIEQAEQLEQLRALWHGERIAVLITESAPEAGIDTPADLARVQALFQPGSK.

It belongs to the KdsB family.

The protein resides in the cytoplasm. The catalysed reaction is 3-deoxy-alpha-D-manno-oct-2-ulosonate + CTP = CMP-3-deoxy-beta-D-manno-octulosonate + diphosphate. The protein operates within nucleotide-sugar biosynthesis; CMP-3-deoxy-D-manno-octulosonate biosynthesis; CMP-3-deoxy-D-manno-octulosonate from 3-deoxy-D-manno-octulosonate and CTP: step 1/1. Its pathway is bacterial outer membrane biogenesis; lipopolysaccharide biosynthesis. Functionally, activates KDO (a required 8-carbon sugar) for incorporation into bacterial lipopolysaccharide in Gram-negative bacteria. The protein is 3-deoxy-manno-octulosonate cytidylyltransferase of Burkholderia cenocepacia (strain HI2424).